A 392-amino-acid chain; its full sequence is Queuine tRNA-ribosyltransferase (392 aa).

Asp92 functions as the Proton acceptor in the catalytic mechanism. Substrate is bound by residues 92–96 (DSGGF), Asp146, Gln188, and Gly215. The segment at 246–252 (GVGSPED) is RNA binding. Asp265 (nucleophile) is an active-site residue. The RNA binding; important for wobble base 34 recognition stretch occupies residues 270-274 (TRLGR). Zn(2+)-binding residues include Cys303, Cys305, Cys308, and His334.

Belongs to the queuine tRNA-ribosyltransferase family. Homodimer. Within each dimer, one monomer is responsible for RNA recognition and catalysis, while the other monomer binds to the replacement base PreQ1. The cofactor is Zn(2+).

The catalysed reaction is 7-aminomethyl-7-carbaguanine + guanosine(34) in tRNA = 7-aminomethyl-7-carbaguanosine(34) in tRNA + guanine. The protein operates within tRNA modification; tRNA-queuosine biosynthesis. In terms of biological role, catalyzes the base-exchange of a guanine (G) residue with the queuine precursor 7-aminomethyl-7-deazaguanine (PreQ1) at position 34 (anticodon wobble position) in tRNAs with GU(N) anticodons (tRNA-Asp, -Asn, -His and -Tyr). Catalysis occurs through a double-displacement mechanism. The nucleophile active site attacks the C1' of nucleotide 34 to detach the guanine base from the RNA, forming a covalent enzyme-RNA intermediate. The proton acceptor active site deprotonates the incoming PreQ1, allowing a nucleophilic attack on the C1' of the ribose to form the product. After dissociation, two additional enzymatic reactions on the tRNA convert PreQ1 to queuine (Q), resulting in the hypermodified nucleoside queuosine (7-(((4,5-cis-dihydroxy-2-cyclopenten-1-yl)amino)methyl)-7-deazaguanosine). This chain is Queuine tRNA-ribosyltransferase, found in Herpetosiphon aurantiacus (strain ATCC 23779 / DSM 785 / 114-95).